We begin with the raw amino-acid sequence, 240 residues long: Coatomer subunit delta (240 aa).

The segment covering 215–226 has biased composition (low complexity); the sequence is AAAKASSAPKAK. The segment at 215-240 is disordered; it reads AAAKASSAPKAKGMQLGKKKNTSLLY. Residues 231–240 show a composition bias toward basic residues; it reads GKKKNTSLLY.

This sequence belongs to the adaptor complexes medium subunit family. Delta-COP subfamily. As to quaternary structure, oligomeric complex that consists of at least the alpha, beta, beta', gamma, delta, epsilon and zeta subunits.

The protein localises to the cytoplasm. It is found in the nucleus. Functionally, the coatomer is a cytosolic protein complex that binds to dilysine motifs and reversibly associates with Golgi non-clathrin-coated vesicles, which further mediate biosynthetic protein transport from the ER, via the Golgi up to the trans Golgi network. Coatomer complex is required for budding from Golgi membranes, and is essential for the retrograde Golgi-to-ER transport of dilysine-tagged proteins. In Schizosaccharomyces pombe (strain 972 / ATCC 24843) (Fission yeast), this protein is Coatomer subunit delta (ret2).